The following is a 170-amino-acid chain: Phosphopantetheine adenylyltransferase (170 aa).

Residue T18 participates in substrate binding. ATP-binding positions include T18–F19 and H26. Substrate contacts are provided by K50, L84, and R98. Residues G99–R101, E109, and W134–S140 contribute to the ATP site.

Belongs to the bacterial CoaD family. In terms of assembly, homohexamer. Requires Mg(2+) as cofactor.

It is found in the cytoplasm. The enzyme catalyses (R)-4'-phosphopantetheine + ATP + H(+) = 3'-dephospho-CoA + diphosphate. It participates in cofactor biosynthesis; coenzyme A biosynthesis; CoA from (R)-pantothenate: step 4/5. In terms of biological role, reversibly transfers an adenylyl group from ATP to 4'-phosphopantetheine, yielding dephospho-CoA (dPCoA) and pyrophosphate. This chain is Phosphopantetheine adenylyltransferase, found in Desulfotalea psychrophila (strain LSv54 / DSM 12343).